The primary structure comprises 658 residues: Biosynthetic arginine decarboxylase (658 aa).

At K127 the chain carries N6-(pyridoxal phosphate)lysine. F307–Y317 contacts substrate.

This sequence belongs to the Orn/Lys/Arg decarboxylase class-II family. SpeA subfamily. In terms of assembly, homotetramer. Pyridoxal 5'-phosphate is required as a cofactor. The cofactor is Mg(2+). Post-translationally, processed post-translationally to a 70 kDa mature form. In terms of processing, the N-terminus is blocked.

Its subcellular location is the periplasm. The enzyme catalyses L-arginine + H(+) = agmatine + CO2. It functions in the pathway amine and polyamine biosynthesis; agmatine biosynthesis; agmatine from L-arginine: step 1/1. Down-regulated by polyamine end products putrescine and spermidine. Functionally, catalyzes the biosynthesis of agmatine from arginine. The polypeptide is Biosynthetic arginine decarboxylase (speA) (Escherichia coli (strain K12)).